Consider the following 286-residue polypeptide: Polyamine aminopropyltransferase (286 aa).

The PABS domain occupies 3–240 (DLWYSESHAD…GHWLFGFASK (238 aa)). Glutamine 32 contributes to the S-methyl-5'-thioadenosine binding site. Spermidine contacts are provided by histidine 63 and aspartate 87. S-methyl-5'-thioadenosine contacts are provided by residues glutamate 107 and 139–140 (DG). Aspartate 158 serves as the catalytic Proton acceptor. 158 to 161 (DSTD) is a spermidine binding site. Proline 165 serves as a coordination point for S-methyl-5'-thioadenosine.

The protein belongs to the spermidine/spermine synthase family. In terms of assembly, homodimer or homotetramer.

The protein resides in the cytoplasm. It catalyses the reaction S-adenosyl 3-(methylsulfanyl)propylamine + putrescine = S-methyl-5'-thioadenosine + spermidine + H(+). It participates in amine and polyamine biosynthesis; spermidine biosynthesis; spermidine from putrescine: step 1/1. Functionally, catalyzes the irreversible transfer of a propylamine group from the amino donor S-adenosylmethioninamine (decarboxy-AdoMet) to putrescine (1,4-diaminobutane) to yield spermidine. The sequence is that of Polyamine aminopropyltransferase from Clostridium acetobutylicum (strain ATCC 824 / DSM 792 / JCM 1419 / IAM 19013 / LMG 5710 / NBRC 13948 / NRRL B-527 / VKM B-1787 / 2291 / W).